Consider the following 513-residue polypeptide: Probable cytosol aminopeptidase (513 aa).

Mn(2+)-binding residues include K277 and D282. Residue K289 is part of the active site. The Mn(2+) site is built by D300, D359, and E361. R363 is an active-site residue.

Belongs to the peptidase M17 family. Requires Mn(2+) as cofactor.

The protein localises to the cytoplasm. It carries out the reaction Release of an N-terminal amino acid, Xaa-|-Yaa-, in which Xaa is preferably Leu, but may be other amino acids including Pro although not Arg or Lys, and Yaa may be Pro. Amino acid amides and methyl esters are also readily hydrolyzed, but rates on arylamides are exceedingly low.. The enzyme catalyses Release of an N-terminal amino acid, preferentially leucine, but not glutamic or aspartic acids.. In terms of biological role, presumably involved in the processing and regular turnover of intracellular proteins. Catalyzes the removal of unsubstituted N-terminal amino acids from various peptides. This Mycobacterium sp. (strain JLS) protein is Probable cytosol aminopeptidase.